The sequence spans 89 residues: Small ribosomal subunit protein uS15 (89 aa).

This sequence belongs to the universal ribosomal protein uS15 family. Part of the 30S ribosomal subunit. Forms a bridge to the 50S subunit in the 70S ribosome, contacting the 23S rRNA.

Its function is as follows. One of the primary rRNA binding proteins, it binds directly to 16S rRNA where it helps nucleate assembly of the platform of the 30S subunit by binding and bridging several RNA helices of the 16S rRNA. Functionally, forms an intersubunit bridge (bridge B4) with the 23S rRNA of the 50S subunit in the ribosome. This chain is Small ribosomal subunit protein uS15, found in Syntrophomonas wolfei subsp. wolfei (strain DSM 2245B / Goettingen).